The primary structure comprises 490 residues: Glutamyl-tRNA(Gln) amidotransferase subunit A (490 aa).

Residues Lys-78 and Ser-158 each act as charge relay system in the active site. Catalysis depends on Ser-182, which acts as the Acyl-ester intermediate.

Belongs to the amidase family. GatA subfamily. As to quaternary structure, heterotrimer of A, B and C subunits.

The catalysed reaction is L-glutamyl-tRNA(Gln) + L-glutamine + ATP + H2O = L-glutaminyl-tRNA(Gln) + L-glutamate + ADP + phosphate + H(+). Its function is as follows. Allows the formation of correctly charged Gln-tRNA(Gln) through the transamidation of misacylated Glu-tRNA(Gln) in organisms which lack glutaminyl-tRNA synthetase. The reaction takes place in the presence of glutamine and ATP through an activated gamma-phospho-Glu-tRNA(Gln). This Caulobacter sp. (strain K31) protein is Glutamyl-tRNA(Gln) amidotransferase subunit A.